Reading from the N-terminus, the 373-residue chain is Probable tRNA sulfurtransferase (373 aa).

The THUMP domain occupies 54 to 158 (NKNIEELSKV…NDVAYFYYKI (105 aa)). ATP-binding positions include 176 to 177 (LF), 201 to 202 (NF), Lys256, Gly278, and Gln287.

It belongs to the ThiI family.

It localises to the cytoplasm. It catalyses the reaction [ThiI sulfur-carrier protein]-S-sulfanyl-L-cysteine + a uridine in tRNA + 2 reduced [2Fe-2S]-[ferredoxin] + ATP + H(+) = [ThiI sulfur-carrier protein]-L-cysteine + a 4-thiouridine in tRNA + 2 oxidized [2Fe-2S]-[ferredoxin] + AMP + diphosphate. The catalysed reaction is [ThiS sulfur-carrier protein]-C-terminal Gly-Gly-AMP + S-sulfanyl-L-cysteinyl-[cysteine desulfurase] + AH2 = [ThiS sulfur-carrier protein]-C-terminal-Gly-aminoethanethioate + L-cysteinyl-[cysteine desulfurase] + A + AMP + 2 H(+). The protein operates within cofactor biosynthesis; thiamine diphosphate biosynthesis. Catalyzes the ATP-dependent transfer of a sulfur to tRNA to produce 4-thiouridine in position 8 of tRNAs, which functions as a near-UV photosensor. Also catalyzes the transfer of sulfur to the sulfur carrier protein ThiS, forming ThiS-thiocarboxylate. This is a step in the synthesis of thiazole, in the thiamine biosynthesis pathway. The sulfur is donated as persulfide by IscS. This chain is Probable tRNA sulfurtransferase, found in Saccharolobus islandicus (strain L.S.2.15 / Lassen #1) (Sulfolobus islandicus).